A 317-amino-acid polypeptide reads, in one-letter code: Transaldolase (317 aa).

K132 serves as the catalytic Schiff-base intermediate with substrate.

Belongs to the transaldolase family. Type 1 subfamily.

It localises to the cytoplasm. It catalyses the reaction D-sedoheptulose 7-phosphate + D-glyceraldehyde 3-phosphate = D-erythrose 4-phosphate + beta-D-fructose 6-phosphate. Its pathway is carbohydrate degradation; pentose phosphate pathway; D-glyceraldehyde 3-phosphate and beta-D-fructose 6-phosphate from D-ribose 5-phosphate and D-xylulose 5-phosphate (non-oxidative stage): step 2/3. Its function is as follows. Transaldolase is important for the balance of metabolites in the pentose-phosphate pathway. The polypeptide is Transaldolase (Haemophilus influenzae (strain ATCC 51907 / DSM 11121 / KW20 / Rd)).